The following is a 398-amino-acid chain: Odorant receptor 24a (398 aa).

Residues 1 to 14 are Cytoplasmic-facing; the sequence is MLPRFLTASYPMER. A helical transmembrane segment spans residues 15–31; sequence HYFMVPKFALSLIGFYP. Topologically, residues 32–46 are extracellular; the sequence is EQKRTVLVKLWSFFN. Residues 47–67 traverse the membrane as a helical segment; that stretch reads FFILTYGCYAEAYYGIHYIPI. Residues 68 to 74 are Cytoplasmic-facing; sequence NIATALD. Residues 75 to 95 form a helical membrane-spanning segment; the sequence is ALCPVASSILSLVKMVAIWWY. Over 96-124 the chain is Extracellular; that stretch reads QDELRSLIERVRFLTEQQKSKRKLGYKKR. A helical transmembrane segment spans residues 125 to 145; the sequence is FYTLATQLTFLLLCCGFCTST. Residues 146–199 are Cytoplasmic-facing; sequence SYSVRHLIDNILRRTHGKDWIYETPFKMMFPDLLLRLPLYPITYILVHWHGYIT. Residues 200–220 traverse the membrane as a helical segment; that stretch reads VVCFVGADGFFLGFCLYFTVL. At 221 to 269 the chain is on the extracellular side; that stretch reads LLCLQDDVCDLLEVENIEKSPSEAEEARIVREMEKLVDRHNEVAELTER. Residues 270–290 form a helical membrane-spanning segment; sequence LSGVMVEITLAHFVTSSLIIG. At 291–295 the chain is on the cytoplasmic side; that stretch reads TSVVD. A helical membrane pass occupies residues 296 to 316; sequence ILLFSGLGIIVYVVYTCAVGV. Over 317–398 the chain is Extracellular; that stretch reads EIFLYCLGGS…SLIALAKSVI (82 aa).

Belongs to the insect chemoreceptor superfamily. Heteromeric odorant receptor channel (TC 1.A.69) family. Or1a subfamily. Interacts with Orco. Complexes exist early in the endomembrane system in olfactory sensory neurons (OSNs), coupling these complexes to the conserved ciliary trafficking pathway. Not expressed in either the antenna or maxillary palp.

It is found in the cell membrane. Odorant receptor which mediates acceptance or avoidance behavior, depending on its substrates. The odorant receptor repertoire encodes a large collection of odor stimuli that vary widely in identity, intensity, and duration. May form a complex with Orco to form odorant-sensing units, providing sensitive and prolonged odorant signaling and calcium permeability. Involved in the behavioral responses to pentanol, hexanol, octanol, nonanol, propyl acetate, butyl acetate, isoamyl acetate, methyl caproate, anisole, heptanal, 2-heptanone, r-carvone, and nonanoic acid. Also responds to pyrazines. The protein is Odorant receptor 24a (Or24a) of Drosophila melanogaster (Fruit fly).